A 378-amino-acid chain; its full sequence is 4-hydroxy-3-methylbut-2-en-1-yl diphosphate synthase (flavodoxin) (378 aa).

4 residues coordinate [4Fe-4S] cluster: cysteine 268, cysteine 271, cysteine 303, and glutamate 310. A disordered region spans residues alanine 359–glutamine 378.

Belongs to the IspG family. The cofactor is [4Fe-4S] cluster.

It catalyses the reaction (2E)-4-hydroxy-3-methylbut-2-enyl diphosphate + oxidized [flavodoxin] + H2O + 2 H(+) = 2-C-methyl-D-erythritol 2,4-cyclic diphosphate + reduced [flavodoxin]. It participates in isoprenoid biosynthesis; isopentenyl diphosphate biosynthesis via DXP pathway; isopentenyl diphosphate from 1-deoxy-D-xylulose 5-phosphate: step 5/6. Functionally, converts 2C-methyl-D-erythritol 2,4-cyclodiphosphate (ME-2,4cPP) into 1-hydroxy-2-methyl-2-(E)-butenyl 4-diphosphate. This Bacillus cereus (strain ZK / E33L) protein is 4-hydroxy-3-methylbut-2-en-1-yl diphosphate synthase (flavodoxin).